The following is a 315-amino-acid chain: Pantothenate kinase (315 aa).

94–101 (GSVAVGKS) is an ATP binding site.

This sequence belongs to the prokaryotic pantothenate kinase family.

The protein resides in the cytoplasm. The enzyme catalyses (R)-pantothenate + ATP = (R)-4'-phosphopantothenate + ADP + H(+). The protein operates within cofactor biosynthesis; coenzyme A biosynthesis; CoA from (R)-pantothenate: step 1/5. This is Pantothenate kinase from Shewanella amazonensis (strain ATCC BAA-1098 / SB2B).